The following is an 847-amino-acid chain: MASDSSLGNTNDGPPSPGENVSSPIENTYSSPAALHRRRRGRSSTPTQFATPPPPPSRLASSNSTPPTSRPSAARSKGRNGHGGGGGGGGGGDPGTPMSTDEPLPSSDDGEEDGGDDTTPTFVWGTNISVQDVKSAIEMFVKHFREARENSDDLFREGKYMVSIRKVIEIEGEWIDVDAFDVFDYDPDLYNKMVRYPLEVLAIFDIVLMDIVSTINRLFEKHVQVRIFNLRTSTSMRNLNPSDIEKMISLKGMIIRSSSIIPEIREAVFRCLVCGYFSDPIIVDRGKISEPPTCLKQECMTKNSMTLVHNRCRFADKQIVRLQETPDEIPEGGTPHTVSLLLHDKLVDNGKPGDRIEVTGIYRAMTVRVGPAHRTVKSVFKTYIDCLHIKKASKLRMSAEDPMDVDNSLRRVDEDVELDEEKLRKFQELSKQPDIYERLSRSLAPNIWELDDVKKGLLCQLFGGNALNLASGANFRGDINILLVGDPGTSKSQLLQYIHKLSPRGIYTSGRGSSAVGLTAYVAKDPETGETVLESGALVLSDRGICCIDEFDKMSDSARSMLHEVMEQQTVSIAKAGIIASLNARTSVLACANPSGSRYNPRLSVIENIHLPPTLLSRFDLIYLILDKPDEQTDRRLAKHIVALHFENAESAQEEAIDITTLTTYVSYARKNIHPKLSDEAAEELTRGYVELRKAGKFAGSSKKVITATPRQIESLIRLSEALARMRFSEWVEKHDVDEAFRLLRVAMQQSATDHATGTIDMDLINTGVSASERMRRDTFASSIRDIALEKMQIGGSSMRLSELLEELKKHGGNINTEIHLHDVRKAVATLASEGFLVAEGDRIKRV.

Over residues 1-31 (MASDSSLGNTNDGPPSPGENVSSPIENTYSS) the composition is skewed to polar residues. The segment at 1–123 (MASDSSLGNT…GGDDTTPTFV (123 aa)) is disordered. Over residues 60–75 (ASSNSTPPTSRPSAAR) the composition is skewed to low complexity. Residues 81–94 (GHGGGGGGGGGGDP) are compositionally biased toward gly residues. Residues 271-299 (CLVCGYFSDPIIVDRGKISEPPTCLKQEC) form a C4-type zinc finger. One can recognise an MCM domain in the interval 435–641 (IYERLSRSLA…QTDRRLAKHI (207 aa)). An ATP-binding site is contributed by 485–492 (GDPGTSKS). The Arginine finger motif lies at 617-620 (SRFD).

It belongs to the MCM family. As to quaternary structure, component of the minichromosome maintenance (MCM) complex, a heterotetramer composed of MCM2, MCM3, MCM4, MCM5, MCM6 and MCM7. Interacts with ETG1. In terms of tissue distribution, expressed in shoot apex and flower buds.

It is found in the nucleus. It catalyses the reaction ATP + H2O = ADP + phosphate + H(+). In terms of biological role, probable component of the MCM2-7 complex (MCM complex) that may function as a DNA helicase and which is essential to undergo a single round of replication initiation and elongation per cell cycle in eukaryotic cells. The protein is DNA replication licensing factor MCM4 (MCM4) of Arabidopsis thaliana (Mouse-ear cress).